The sequence spans 557 residues: Dihydroxy-acid dehydratase (557 aa).

Mg(2+) is bound at residue Asp-78. Cys-119 contacts [2Fe-2S] cluster. Mg(2+)-binding residues include Asp-120 and Lys-121. Lys-121 bears the N6-carboxylysine mark. Cys-194 contacts [2Fe-2S] cluster. Position 446 (Glu-446) interacts with Mg(2+). The active-site Proton acceptor is the Ser-472.

Belongs to the IlvD/Edd family. As to quaternary structure, homodimer. It depends on [2Fe-2S] cluster as a cofactor. Requires Mg(2+) as cofactor.

It carries out the reaction (2R)-2,3-dihydroxy-3-methylbutanoate = 3-methyl-2-oxobutanoate + H2O. It catalyses the reaction (2R,3R)-2,3-dihydroxy-3-methylpentanoate = (S)-3-methyl-2-oxopentanoate + H2O. It participates in amino-acid biosynthesis; L-isoleucine biosynthesis; L-isoleucine from 2-oxobutanoate: step 3/4. The protein operates within amino-acid biosynthesis; L-valine biosynthesis; L-valine from pyruvate: step 3/4. Its function is as follows. Functions in the biosynthesis of branched-chain amino acids. Catalyzes the dehydration of (2R,3R)-2,3-dihydroxy-3-methylpentanoate (2,3-dihydroxy-3-methylvalerate) into 2-oxo-3-methylpentanoate (2-oxo-3-methylvalerate) and of (2R)-2,3-dihydroxy-3-methylbutanoate (2,3-dihydroxyisovalerate) into 2-oxo-3-methylbutanoate (2-oxoisovalerate), the penultimate precursor to L-isoleucine and L-valine, respectively. The polypeptide is Dihydroxy-acid dehydratase (Desulfosudis oleivorans (strain DSM 6200 / JCM 39069 / Hxd3) (Desulfococcus oleovorans)).